A 231-amino-acid chain; its full sequence is Ribonuclease 3 (231 aa).

An RNase III domain is found at 1–134; sequence MKTLEKKLAE…FLGALLLDAG (134 aa). Residue Glu47 participates in Mg(2+) binding. The active site involves Asp51. Positions 120 and 123 each coordinate Mg(2+). The active site involves Glu123. Positions 160–229 constitute a DRBM domain; the sequence is DYKTALQELL…AKNALEKLQR (70 aa).

It belongs to the ribonuclease III family. In terms of assembly, homodimer. Mg(2+) is required as a cofactor.

Its subcellular location is the cytoplasm. It carries out the reaction Endonucleolytic cleavage to 5'-phosphomonoester.. Its function is as follows. Digests double-stranded RNA. Involved in the processing of primary rRNA transcript to yield the immediate precursors to the large and small rRNAs (23S and 16S). Also processes some mRNAs, and tRNAs when they are encoded in the rRNA operon. In terms of biological role, CRISPR (clustered regularly interspaced short palindromic repeat) is an adaptive immune system that provides protection against mobile genetic elements (viruses, transposable elements and conjugative plasmids). CRISPR clusters contain spacers, sequences complementary to antecedent mobile elements, and target invading nucleic acids. CRISPR clusters are transcribed and processed into CRISPR RNA (crRNA). In this organism endogenous ribonuclease 3 and Cas9 are required for correct coprocessing of pre-crRNA and the trans-encoded small RNA (tracrRNA). Cas9, crRNA and tracrRNA are required for cleavage of invading DNA. Complements pre-crRNA and tracrRNA coprocessing defects in an rnc deletion in S.pyogenes strain 370. This is Ribonuclease 3 from Streptococcus mutans serotype c (strain ATCC 700610 / UA159).